A 115-amino-acid chain; its full sequence is NADH-ubiquinone oxidoreductase chain 3 (115 aa).

The next 3 helical transmembrane spans lie at 3–23 (LMLT…IAFW), 55–75 (FFLV…LLPL), and 84–104 (LNTM…SLAY).

It belongs to the complex I subunit 3 family. As to quaternary structure, core subunit of respiratory chain NADH dehydrogenase (Complex I) which is composed of 45 different subunits. Interacts with TMEM186. Interacts with TMEM242.

It localises to the mitochondrion inner membrane. It catalyses the reaction a ubiquinone + NADH + 5 H(+)(in) = a ubiquinol + NAD(+) + 4 H(+)(out). In terms of biological role, core subunit of the mitochondrial membrane respiratory chain NADH dehydrogenase (Complex I) which catalyzes electron transfer from NADH through the respiratory chain, using ubiquinone as an electron acceptor. Essential for the catalytic activity of complex I. This chain is NADH-ubiquinone oxidoreductase chain 3, found in Equus asinus (Donkey).